The following is a 110-amino-acid chain: MLVILRSVVLFVLAAVAEIGGAWLVWQGVREQRGLLWIGAGVIALGIYGFVATFQPDPNFGRILAAYGGVFVAGSLLWGVVVDGFRPDRWDLIGATICLAGVAVIMYAPR.

4 consecutive transmembrane segments (helical) span residues 8-28 (VVLF…VWQG), 34-54 (GLLW…VATF), 63-83 (ILAA…VVVD), and 89-109 (RWDL…MYAP).

The protein belongs to the UPF0060 family.

It localises to the cell membrane. This Saccharopolyspora erythraea (strain ATCC 11635 / DSM 40517 / JCM 4748 / NBRC 13426 / NCIMB 8594 / NRRL 2338) protein is UPF0060 membrane protein SACE_5620.